The primary structure comprises 407 residues: Arginine deiminase (407 aa).

Catalysis depends on C397, which acts as the Amidino-cysteine intermediate.

It belongs to the arginine deiminase family.

It is found in the cytoplasm. It carries out the reaction L-arginine + H2O = L-citrulline + NH4(+). The protein operates within amino-acid degradation; L-arginine degradation via ADI pathway; carbamoyl phosphate from L-arginine: step 1/2. In Escherichia coli O81 (strain ED1a), this protein is Arginine deiminase.